The chain runs to 163 residues: Cyclic pyranopterin monophosphate synthase (163 aa).

Residues 75–77 (LCH) and 115–116 (ME) contribute to the substrate site. Asp-130 is an active-site residue.

The protein belongs to the MoaC family. Homohexamer; trimer of dimers.

It carries out the reaction (8S)-3',8-cyclo-7,8-dihydroguanosine 5'-triphosphate = cyclic pyranopterin phosphate + diphosphate. The protein operates within cofactor biosynthesis; molybdopterin biosynthesis. Its function is as follows. Catalyzes the conversion of (8S)-3',8-cyclo-7,8-dihydroguanosine 5'-triphosphate to cyclic pyranopterin monophosphate (cPMP). In Variovorax paradoxus (strain S110), this protein is Cyclic pyranopterin monophosphate synthase.